A 350-amino-acid polypeptide reads, in one-letter code: Methionine import ATP-binding protein MetN (350 aa).

The region spanning 2–241 is the ABC transporter domain; sequence IQIKNLKKEY…PQAPVTRSFV (240 aa). 38 to 45 contacts ATP; sequence GHSGAGKS.

Belongs to the ABC transporter superfamily. Methionine importer (TC 3.A.1.24) family. As to quaternary structure, the complex is composed of two ATP-binding proteins (MetN), two transmembrane proteins (MetI) and a solute-binding protein (MetQ).

It is found in the cell inner membrane. The enzyme catalyses L-methionine(out) + ATP + H2O = L-methionine(in) + ADP + phosphate + H(+). It catalyses the reaction D-methionine(out) + ATP + H2O = D-methionine(in) + ADP + phosphate + H(+). Its function is as follows. Part of the ABC transporter complex MetNIQ involved in methionine import. Responsible for energy coupling to the transport system. The polypeptide is Methionine import ATP-binding protein MetN (Francisella tularensis subsp. holarctica (strain LVS)).